Consider the following 469-residue polypeptide: Tubulin gamma-2 chain (469 aa).

Residue 142-148 participates in GTP binding; sequence AGGTGSG.

The protein belongs to the tubulin family.

The protein localises to the cytoplasm. The protein resides in the cytoskeleton. Its subcellular location is the microtubule organizing center. Tubulin is the major constituent of microtubules. The gamma chain is found at microtubule organizing centers (MTOC) such as the spindle poles, suggesting that it is involved in the minus-end nucleation of microtubule assembly. This is Tubulin gamma-2 chain (TUBG2) from Oryza sativa subsp. japonica (Rice).